Consider the following 23-residue polypeptide: NADP-dependent malic enzyme (23 aa).

It belongs to the malic enzymes family. Homotetramer.

It carries out the reaction (S)-malate + NADP(+) = pyruvate + CO2 + NADPH. The enzyme catalyses oxaloacetate + H(+) = pyruvate + CO2. The chain is NADP-dependent malic enzyme from Populus euphratica (Euphrates poplar).